The chain runs to 269 residues: Undecaprenyl-diphosphatase (269 aa).

8 consecutive transmembrane segments (helical) span residues 1–21 (MSIF…FLPI), 39–59 (LPIL…CTVF), 86–106 (LMMI…GLLL), 112–132 (TIDI…LIAS), 144–164 (VTLL…IPGI), 184–204 (AGEF…ILEI), 210–230 (LLAG…FVVG), and 249–269 (FAFY…GFAG).

It belongs to the UppP family.

It localises to the cell inner membrane. The enzyme catalyses di-trans,octa-cis-undecaprenyl diphosphate + H2O = di-trans,octa-cis-undecaprenyl phosphate + phosphate + H(+). Functionally, catalyzes the dephosphorylation of undecaprenyl diphosphate (UPP). Confers resistance to bacitracin. This Treponema denticola (strain ATCC 35405 / DSM 14222 / CIP 103919 / JCM 8153 / KCTC 15104) protein is Undecaprenyl-diphosphatase.